A 717-amino-acid polypeptide reads, in one-letter code: DNA ligase (717 aa).

NAD(+)-binding positions include 44–48 (DADYD), 93–94 (SL), and E127. Catalysis depends on K129, which acts as the N6-AMP-lysine intermediate. NAD(+)-binding residues include R150, E186, K302, and K326. Positions 431, 434, 455, and 461 each coordinate Zn(2+). In terms of domain architecture, BRCT spans 639-717 (ATDSPVAGKT…EDEWLALIGG (79 aa)).

Belongs to the NAD-dependent DNA ligase family. LigA subfamily. Requires Mg(2+) as cofactor. It depends on Mn(2+) as a cofactor.

The catalysed reaction is NAD(+) + (deoxyribonucleotide)n-3'-hydroxyl + 5'-phospho-(deoxyribonucleotide)m = (deoxyribonucleotide)n+m + AMP + beta-nicotinamide D-nucleotide.. Functionally, DNA ligase that catalyzes the formation of phosphodiester linkages between 5'-phosphoryl and 3'-hydroxyl groups in double-stranded DNA using NAD as a coenzyme and as the energy source for the reaction. It is essential for DNA replication and repair of damaged DNA. This Rhizobium meliloti (strain 1021) (Ensifer meliloti) protein is DNA ligase.